The primary structure comprises 514 residues: Probable lysine--tRNA ligase, cytoplasmic (514 aa).

This sequence belongs to the class-II aminoacyl-tRNA synthetase family. In terms of assembly, homodimer.

It localises to the cytoplasm. It catalyses the reaction tRNA(Lys) + L-lysine + ATP = L-lysyl-tRNA(Lys) + AMP + diphosphate. The chain is Probable lysine--tRNA ligase, cytoplasmic from Vairimorpha ceranae (strain BRL01) (Microsporidian parasite).